Reading from the N-terminus, the 507-residue chain is Phosphoenolpyruvate carboxylase (507 aa).

The segment at 1–25 (MHKIDRKIPNIMGTQHPDNAGVPFF) is disordered.

It belongs to the PEPCase type 2 family. In terms of assembly, homotetramer. Mg(2+) serves as cofactor.

The enzyme catalyses oxaloacetate + phosphate = phosphoenolpyruvate + hydrogencarbonate. Functionally, catalyzes the irreversible beta-carboxylation of phosphoenolpyruvate (PEP) to form oxaloacetate (OAA), a four-carbon dicarboxylic acid source for the tricarboxylic acid cycle. The chain is Phosphoenolpyruvate carboxylase from Oenococcus oeni (strain ATCC BAA-331 / PSU-1).